The primary structure comprises 46 residues: MRPFLQEYLMRRLLHYLINNIREHLMLYLFLWGLLAIMDLIYVFYF.

This is an uncharacterized protein from Escherichia coli (strain K12).